The chain runs to 472 residues: Putative F-box/LRR-repeat protein At5g54820 (472 aa).

The 49-residue stretch at 6–54 (QDRLSSLPDILLIMIISFLPLKECVRTSVLSKRWRYLCLETTNLSFKES) folds into the F-box domain. LRR repeat units lie at residues 58 to 87 (NPDI…SITQ), 135 to 164 (NGDI…KIYG), 183 to 208 (IGWV…SIKN), 225 to 250 (VIEH…KYSG), 283 to 308 (SSRI…TVCP), and 338 to 363 (MHTK…GFDI).

The polypeptide is Putative F-box/LRR-repeat protein At5g54820 (Arabidopsis thaliana (Mouse-ear cress)).